The primary structure comprises 481 residues: Leukocyte immunoglobulin-like receptor subfamily A member 6 (481 aa).

A signal peptide spans 1–23; the sequence is MTPALTALLCLGLSLGPRTRVQA. At 24-447 the chain is on the extracellular side; sequence GPFPKPTLWA…SHAKDYTVEN (424 aa). Cysteine 49 and cysteine 98 are disulfide-bonded. The segment covering 59-70 has biased composition (basic and acidic residues); sequence QLDKEGSPEPLD. Positions 59–78 are disordered; the sequence is QLDKEGSPEPLDRNNPLEPK. A glycan (N-linked (GlcNAc...) asparagine) is linked at asparagine 139. Disulfide bonds link cysteine 144–cysteine 196 and cysteine 245–cysteine 296. 2 Ig-like C2-type domains span residues 225–314 and 323–408; these read PSLL…DPLN and DTVS…HLLS. N-linked (GlcNAc...) asparagine glycosylation is found at asparagine 301 and asparagine 340. Cysteine 345 and cysteine 396 form a disulfide bridge. The tract at residues 419-439 is disordered; sequence SGHSGGSSLPPTGPPSTPASH. Residues 448-468 form a helical membrane-spanning segment; sequence LIRMGMAGLVLVFLGILLFEA. At 469-481 the chain is on the cytoplasmic side; sequence QHSQRNPQDAAGR.

Its subcellular location is the membrane. Its function is as follows. May act as receptor for class I MHC antigens. This is Leukocyte immunoglobulin-like receptor subfamily A member 6 (LILRA6) from Homo sapiens (Human).